We begin with the raw amino-acid sequence, 255 residues long: 3-dehydroquinate dehydratase (255 aa).

3-dehydroquinate-binding positions include E47–R49 and R83. H145 functions as the Proton donor/acceptor in the catalytic mechanism. Residue K172 is the Schiff-base intermediate with substrate of the active site. 3-dehydroquinate contacts are provided by R215, S234, and Q238.

It belongs to the type-I 3-dehydroquinase family. As to quaternary structure, homodimer.

The catalysed reaction is 3-dehydroquinate = 3-dehydroshikimate + H2O. The protein operates within metabolic intermediate biosynthesis; chorismate biosynthesis; chorismate from D-erythrose 4-phosphate and phosphoenolpyruvate: step 3/7. Involved in the third step of the chorismate pathway, which leads to the biosynthesis of aromatic amino acids. Catalyzes the cis-dehydration of 3-dehydroquinate (DHQ) and introduces the first double bond of the aromatic ring to yield 3-dehydroshikimate. The sequence is that of 3-dehydroquinate dehydratase from Clostridium kluyveri (strain NBRC 12016).